We begin with the raw amino-acid sequence, 259 residues long: uncharacterized protein (259 aa).

The N-terminal stretch at 1–22 is a signal peptide; that stretch reads MKHSSKIIVFVSFLILTIFIGG. A lipid anchor (N-palmitoyl cysteine) is attached at Cys-23. A lipid anchor (S-diacylglycerol cysteine) is attached at Cys-23.

The protein belongs to the staphylococcal tandem lipoprotein family.

It localises to the cell membrane. This is an uncharacterized protein from Staphylococcus epidermidis (strain ATCC 35984 / DSM 28319 / BCRC 17069 / CCUG 31568 / BM 3577 / RP62A).